The chain runs to 727 residues: Catalase-peroxidase (727 aa).

A disordered region spans residues 1–26 (MDTKVETGGKCPVAHGPAGAKGRGNR). Residues 97 to 219 (WHSAGTYRIT…LGAVQMGLIY (123 aa)) constitute a cross-link (tryptophyl-tyrosyl-methioninium (Trp-Tyr) (with M-245)). Residue His-98 is the Proton acceptor of the active site. Residues 219-245 (YVNPEGPNGNPDPIAAARDIRETFSRM) constitute a cross-link (tryptophyl-tyrosyl-methioninium (Tyr-Met) (with W-97)). Heme b is bound at residue His-260.

It belongs to the peroxidase family. Peroxidase/catalase subfamily. In terms of assembly, homodimer or homotetramer. Heme b serves as cofactor. In terms of processing, formation of the three residue Trp-Tyr-Met cross-link is important for the catalase, but not the peroxidase activity of the enzyme.

It catalyses the reaction H2O2 + AH2 = A + 2 H2O. It carries out the reaction 2 H2O2 = O2 + 2 H2O. Bifunctional enzyme with both catalase and broad-spectrum peroxidase activity. The protein is Catalase-peroxidase of Allorhizobium ampelinum (strain ATCC BAA-846 / DSM 112012 / S4) (Agrobacterium vitis (strain S4)).